We begin with the raw amino-acid sequence, 209 residues long: Ribosomal RNA large subunit methyltransferase E (209 aa).

Gly63, Trp65, Asp83, Asp99, and Asp124 together coordinate S-adenosyl-L-methionine. The active-site Proton acceptor is Lys164.

This sequence belongs to the class I-like SAM-binding methyltransferase superfamily. RNA methyltransferase RlmE family.

The protein resides in the cytoplasm. It catalyses the reaction uridine(2552) in 23S rRNA + S-adenosyl-L-methionine = 2'-O-methyluridine(2552) in 23S rRNA + S-adenosyl-L-homocysteine + H(+). In terms of biological role, specifically methylates the uridine in position 2552 of 23S rRNA at the 2'-O position of the ribose in the fully assembled 50S ribosomal subunit. The sequence is that of Ribosomal RNA large subunit methyltransferase E from Shewanella putrefaciens (strain CN-32 / ATCC BAA-453).